Consider the following 427-residue polypeptide: Gamma-glutamyl phosphate reductase (427 aa).

The protein belongs to the gamma-glutamyl phosphate reductase family.

The protein localises to the cytoplasm. It carries out the reaction L-glutamate 5-semialdehyde + phosphate + NADP(+) = L-glutamyl 5-phosphate + NADPH + H(+). It participates in amino-acid biosynthesis; L-proline biosynthesis; L-glutamate 5-semialdehyde from L-glutamate: step 2/2. Catalyzes the NADPH-dependent reduction of L-glutamate 5-phosphate into L-glutamate 5-semialdehyde and phosphate. The product spontaneously undergoes cyclization to form 1-pyrroline-5-carboxylate. The chain is Gamma-glutamyl phosphate reductase from Rhizobium etli (strain ATCC 51251 / DSM 11541 / JCM 21823 / NBRC 15573 / CFN 42).